We begin with the raw amino-acid sequence, 462 residues long: Lysophospholipid acyltransferase 1 (462 aa).

A run of 9 helical transmembrane segments spans residues 9–29 (SIGV…TIPV), 52–72 (FLSY…PMTI), 84–104 (CGII…VFYM), 158–178 (SLIE…GPVY), 211–231 (AILQ…QYPL), 263–283 (YFIW…FSGW), 353–373 (AVWH…ALMI), 396–416 (IMVF…AVGF), and 431–451 (VYYI…VVPA). The active site involves histidine 356.

Belongs to the membrane-bound acyltransferase family. As to expression, expressed in roots, rosette leaves, petals, stigma, chalazal endosperm of developing seeds and vascular bundles of siliques.

The protein localises to the endoplasmic reticulum membrane. It carries out the reaction a 1-acyl-sn-glycero-3-phosphocholine + an acyl-CoA = a 1,2-diacyl-sn-glycero-3-phosphocholine + CoA. The catalysed reaction is 1-(9Z-octadecenoyl)-sn-glycero-3-phosphocholine + (9Z)-octadecenoyl-CoA = 1,2-di-(9Z-octadecenoyl)-sn-glycero-3-phosphocholine + CoA. It catalyses the reaction 1-(9Z-octadecenoyl)-sn-glycero-3-phosphocholine + (9Z,12Z)-octadecadienoyl-CoA = 1-(9Z)-octadecenoyl-2-(9Z,12Z)-octadecadienoyl-sn-glycero-3-phosphocholine + CoA. The enzyme catalyses (9Z,12Z,15Z)-octadecatrienoyl-CoA + 1-(9Z-octadecenoyl)-sn-glycero-3-phosphocholine = 1-(9Z-octadecaenoyl)-2-(9Z,12Z,15Z-octadecatrienoyl)-sn-glycero-3-phosphocholine + CoA. It carries out the reaction a 1-acyl-sn-glycero-3-phosphoethanolamine + an acyl-CoA = a 1,2-diacyl-sn-glycero-3-phosphoethanolamine + CoA. The catalysed reaction is a 1-acyl-sn-glycero-3-phospho-L-serine + an acyl-CoA = a 1,2-diacyl-sn-glycero-3-phospho-L-serine + CoA. Lysophospholipid acyltransferase with broad specificity. Mediates the conversion of lysophosphatidylethanolamine (1-acyl-sn-glycero-3-phosphoethanolamine or LPE) into phosphatidylethanolamine (1,2-diacyl-sn-glycero-3-phosphoethanolamine or PE) (LPEAT activity). Catalyzes the acylation of lysophosphatidylserine (1-acyl-2-hydroxy-sn-glycero-3-phospho-L-serine or LPS) into phosphatidylserine (1,2-diacyl-sn-glycero-3-phospho-L-serine or PS) (LPSAT activity). Can convert lysophosphatidylcholine (1-acyl-sn-glycero-3-phosphocholine or LPC) into phosphatidylcholine (1,2-diacyl-sn-glycero-3-phosphocholine or PC) (LPCAT activity). Exhibits preference for C18-unsaturated acyl-CoA when transferring an acyl group to lysophosphatidylcholine. Can also utilize lysophosphatidylglycerol (LPG) as substrate in vitro. Has neither activity towards lysophosphatidic acid (LPA) nor lysophosphatidylinositol (LPI). Lysophospholipid acyltransferases catalyze the reacylation step of the phospholipid remodeling pathway also known as the Lands cycle. The primary function of the Lands cycle is to provide a route for acyl remodeling to modify fatty acid (FA) composition of phospholipids derived from the Kennedy pathway. Is involved in PC acyl editing and phosphocholine headgroup exchange between PC and diacylglycerols. This processes control the majority of acyl fluxes through PC to provide polyunsaturated fatty acids for triacylglycerols synthesis in seeds. Involved with LPCAT2 in the direct incorporation of newly synthesized fatty acids exported form the chloroplast into PC through acyl editing. The sequence is that of Lysophospholipid acyltransferase 1 from Arabidopsis thaliana (Mouse-ear cress).